Here is a 401-residue protein sequence, read N- to C-terminus: Deoxyhypusine synthase-like protein (401 aa).

It belongs to the deoxyhypusine synthase family.

This Thermosynechococcus vestitus (strain NIES-2133 / IAM M-273 / BP-1) protein is Deoxyhypusine synthase-like protein.